The following is a 431-amino-acid chain: Salivary plasminogen activator beta (431 aa).

Positions 1–36 (MVNTMKTKLLCVLLLCGAVFSLPRQETYRQLARGSR) are cleaved as a signal peptide. The EGF-like domain maps to 37–75 (AYGGCSELRCFNGGTCWQAASFSDFVCQCPKGYTGKQCE). 12 disulfide bridges follow: Cys-41-Cys-52, Cys-46-Cys-63, Cys-65-Cys-74, Cys-82-Cys-163, Cys-103-Cys-145, Cys-134-Cys-158, Cys-168-Cys-299, Cys-211-Cys-227, Cys-219-Cys-288, Cys-313-Cys-388, Cys-345-Cys-361, and Cys-378-Cys-406. The Kringle domain maps to 82–163 (CYKDQGVTYR…ILEFCSVPVC (82 aa)). Asn-139 carries N-linked (GlcNAc...) asparagine glycosylation. One can recognise a Peptidase S1 domain in the interval 180–430 (STGGLFTDIT…YLGWIRDNMR (251 aa)). Residues His-226 and Asp-275 each act as charge relay system in the active site. Residue Asn-352 is glycosylated (N-linked (GlcNAc...) asparagine). The Charge relay system role is filled by Ser-382.

Belongs to the peptidase S1 family. As to quaternary structure, monomer.

It is found in the secreted. The catalysed reaction is Specific cleavage of Arg-|-Val bond in plasminogen to form plasmin.. Functionally, probably essential to support the feeding habits of this exclusively haematophagous animal. Probable potent thrombolytic agent. This Desmodus rotundus (Vampire bat) protein is Salivary plasminogen activator beta.